Consider the following 458-residue polypeptide: Peptidyl-prolyl cis-trans isomerase FKBP4 (458 aa).

Residue Met1 is modified to N-acetylmethionine; in peptidyl-prolyl cis-trans isomerase FKBP4; alternate. A disordered region spans residues 1-24; the sequence is MTAEEMKAAENGAQSAPLPLEGVD. Thr2 is modified (N-acetylthreonine; in peptidyl-prolyl cis-trans isomerase FKBP4, N-terminally processed; partial). The region spanning 50-138 is the PPIase FKBP-type 1 domain; that stretch reads GDRVFVHYTG…VFEVELFEFK (89 aa). At Thr143 the chain carries Phosphothreonine; by CK2. Residues 167–253 form the PPIase FKBP-type 2 domain; sequence GAMVEVALEG…RYEVRLKSFE (87 aa). Residue Tyr220 is modified to Phosphotyrosine. The interval 267-400 is interaction with tubulin; that stretch reads LEQSNIVKER…TQLAVCQQRT (134 aa). 3 TPR repeats span residues 270-303, 319-352, and 353-386; these read SNIVKERGTAYFKEGKYKQALLQYKKIVSWLEYE, LASHLNLAMCHLKLQAFSAAIESCNKALELDSNN, and EKGLFRRGEAHLAVNDFDLARADFQKVLQLYPSN. Lys282 bears the N6-acetyllysine mark. Arg373 is modified (omega-N-methylarginine). Residues 428 to 458 form a disordered region; it reads EVAAGDHPTDAEMKGERNNVAENQSRVETEA. Positions 434–458 are enriched in basic and acidic residues; it reads HPTDAEMKGERNNVAENQSRVETEA. Thr436 is modified (phosphothreonine). Lys441 is covalently cross-linked (Glycyl lysine isopeptide (Lys-Gly) (interchain with G-Cter in SUMO1)). Residue Ser452 is modified to Phosphoserine.

Homodimer. Interacts with GLMN. Associates with HSP90AA1 and HSPA1A/HSPA1B in steroid hormone receptor complexes. Also interacts with peroxisomal phytanoyl-CoA alpha-hydroxylase (PHYH). Interacts with NR3C1 and dynein. Interacts with HSF1 in the HSP90 complex. Associates with tubulin. Interacts with MAPT/TAU. Interacts (via TPR domain) with S100A1, S100A2 and S100A6; the interaction is Ca(2+) dependent. Interaction with S100A1 and S100A2 (but not with S100A6) leads to inhibition of FKBP4-HSP90 interaction. Interacts with dynein; contributes to NR3C1 transport to the nucleus. In terms of processing, phosphorylation by CK2 results in loss of HSP90 binding activity.

It is found in the cytoplasm. Its subcellular location is the cytosol. It localises to the mitochondrion. The protein localises to the nucleus. The protein resides in the cytoskeleton. The enzyme catalyses [protein]-peptidylproline (omega=180) = [protein]-peptidylproline (omega=0). Inhibited by FK506. Immunophilin protein with PPIase and co-chaperone activities. Component of steroid receptors heterocomplexes through interaction with heat-shock protein 90 (HSP90). May play a role in the intracellular trafficking of heterooligomeric forms of steroid hormone receptors between cytoplasm and nuclear compartments. The isomerase activity controls neuronal growth cones via regulation of TRPC1 channel opening. Also acts as a regulator of microtubule dynamics by inhibiting MAPT/TAU ability to promote microtubule assembly. May have a protective role against oxidative stress in mitochondria. This is Peptidyl-prolyl cis-trans isomerase FKBP4 (Fkbp4) from Mus musculus (Mouse).